The sequence spans 503 residues: uncharacterized protein (503 aa).

ABC transporter domains follow at residues 8-249 and 261-499; these read VPVA…LGRD and IVDQ…MSAI. Position 43–50 (43–50) interacts with ATP; sequence GKNGAGKS.

The protein belongs to the ABC transporter superfamily.

Probably part of a binding-protein-dependent transport system YphDEF. Probably responsible for energy coupling to the transport system. This is an uncharacterized protein from Escherichia coli (strain K12).